The primary structure comprises 180 residues: Prothoracicotropic hormone (180 aa).

An N-terminal signal peptide occupies residues 1-15 (MKLLILCVMVHGLLA). A propeptide spanning residues 16-64 (EGPGQVLWKEQVVAPEFLLDDREDIASNRNAFFYEDKRSFRPEGLGEQV) is cleaved from the precursor. 2 disulfide bridges follow: C88–C123 and C111–C175.

Homodimer; disulfide-linked.

The protein localises to the secreted. Functionally, PTTH is a brain secretory polypeptide of insects which stimulates the prothoracic glands to produce and release ecdysone, the steroid essential to insect development. The protein is Prothoracicotropic hormone of Camponotus floridanus (Florida carpenter ant).